A 73-amino-acid chain; its full sequence is Translation initiation factor IF-1 (73 aa).

Residues 1–73 enclose the S1-like domain; it reads MPKKEGVIEI…TRGRIVYRYK (73 aa).

The protein belongs to the IF-1 family. In terms of assembly, component of the 30S ribosomal translation pre-initiation complex which assembles on the 30S ribosome in the order IF-2 and IF-3, IF-1 and N-formylmethionyl-tRNA(fMet); mRNA recruitment can occur at any time during PIC assembly.

It is found in the cytoplasm. In terms of biological role, one of the essential components for the initiation of protein synthesis. Stabilizes the binding of IF-2 and IF-3 on the 30S subunit to which N-formylmethionyl-tRNA(fMet) subsequently binds. Helps modulate mRNA selection, yielding the 30S pre-initiation complex (PIC). Upon addition of the 50S ribosomal subunit IF-1, IF-2 and IF-3 are released leaving the mature 70S translation initiation complex. The polypeptide is Translation initiation factor IF-1 (Nocardioides sp. (strain ATCC BAA-499 / JS614)).